Reading from the N-terminus, the 274-residue chain is MPGADYSAVKGGGLKLKAGKKNLFKVGKEKKKKNKDDKEKIDPDTVENGGWRKIADEFDMKGGTNVAIEVASGAGSTRTYVAAMDNGKFTIGFPHPEGEGPNPEEIFALVKTPDDSKISLKTGFGRYVGVDSEYQLVAMAEAIGSREQFVLVFQEGKTAFQAVSSPLFLSTVPNKEGHIYVASRTATENEMVNIRTDAIQEGPVDWRSVEDRKNARECETAYVKMYQHSKVDLKNRHIAIDVKDKKGVKKAQADGSAHELLLDRRMKMKSDRYC.

The short motif at 20–36 is the Nuclear localization signal element; the sequence is KKNLFKVGKEKKKKNKD. The segment at 27–46 is disordered; it reads GKEKKKKNKDDKEKIDPDTV. Residues 34–43 show a composition bias toward basic and acidic residues; sequence NKDDKEKIDP. A Bipartite nuclear localization signal motif is present at residues 252-268; that stretch reads QADGSAHELLLDRRMKM.

It belongs to the FRG1 family.

It is found in the nucleus. The protein resides in the cajal body. Its subcellular location is the nucleolus. The protein localises to the cytoplasm. Its function is as follows. Binds to mRNA in a sequence-independent manner. May play a role in regulation of pre-mRNA splicing or in the assembly of rRNA into ribosomal subunits. May be involved in mRNA transport. May be involved in epigenetic regulation of muscle differentiation through regulation of activity of the histone-lysine N-methyltransferase KMT5B. In Caenorhabditis elegans, this protein is Protein FRG1 homolog (frg-1).